The sequence spans 591 residues: Putative BTB/POZ domain-containing protein At5g13600 (591 aa).

The region spanning 28–95 (PDVMIQVVDE…CYGVRIEVTP (68 aa)) is the BTB domain. Residues 208–493 (NWWFNDVSSF…VQVLFFEQMR (286 aa)) enclose the NPH3 domain. Residue Y434 is modified to Phosphotyrosine.

The protein belongs to the NPH3 family.

Its pathway is protein modification; protein ubiquitination. May act as a substrate-specific adapter of an E3 ubiquitin-protein ligase complex (CUL3-RBX1-BTB) which mediates the ubiquitination and subsequent proteasomal degradation of target proteins. This chain is Putative BTB/POZ domain-containing protein At5g13600, found in Arabidopsis thaliana (Mouse-ear cress).